A 218-amino-acid polypeptide reads, in one-letter code: MDNIIVAIDGPAGSGKSTIAKLIAKKFNFTYIDTGAMYRMITLYLLENNINFDDLKEIEKALKNINLDMQGDKFYLNDVDVSTKIREKRINENVSKVASIKIVRDNLVNLQRKISNNKNVILDGRDIGTVVFPNAKVKIFLVAAAEERARRRYNEFLEKKVEITYDEVLKSLKERDYIDSTRKESPLKKADEAIELDTTNLTIEDVINFISKKIEKVK.

Position 10–18 (10–18 (GPAGSGKST)) interacts with ATP.

The protein belongs to the cytidylate kinase family. Type 1 subfamily.

Its subcellular location is the cytoplasm. It carries out the reaction CMP + ATP = CDP + ADP. The catalysed reaction is dCMP + ATP = dCDP + ADP. This is Cytidylate kinase from Fusobacterium nucleatum subsp. nucleatum (strain ATCC 25586 / DSM 15643 / BCRC 10681 / CIP 101130 / JCM 8532 / KCTC 2640 / LMG 13131 / VPI 4355).